Reading from the N-terminus, the 152-residue chain is UPF0266 membrane protein YobD (152 aa).

Helical transmembrane passes span 6–26 (LVLI…QFIM), 45–65 (VDSV…VTSH), and 67–87 (AQMT…IFWI).

The protein belongs to the UPF0266 family.

It localises to the cell inner membrane. The protein is UPF0266 membrane protein YobD of Salmonella paratyphi A (strain ATCC 9150 / SARB42).